Reading from the N-terminus, the 651-residue chain is Beta-glucuronidase (651 aa).

A signal peptide spans 1 to 22 (MSRGPAGAWVALGPLLWTCGLA). N-linked (GlcNAc...) asparagine glycans are attached at residues Asn172 and Asn419. The Proton donor role is filled by Glu450. Asn630 carries N-linked (GlcNAc...) asparagine glycosylation.

It belongs to the glycosyl hydrolase 2 family. As to quaternary structure, homotetramer.

The protein localises to the lysosome. It carries out the reaction a beta-D-glucuronoside + H2O = D-glucuronate + an alcohol. Its activity is regulated as follows. Inhibited by L-aspartic acid. Plays an important role in the degradation of dermatan and keratan sulfates. The protein is Beta-glucuronidase (GUSB) of Canis lupus familiaris (Dog).